Here is a 319-residue protein sequence, read N- to C-terminus: ATP-dependent 6-phosphofructokinase (319 aa).

Gly11 serves as a coordination point for ATP. ADP is bound by residues 21-25 (RSVVR) and Asp59. Residues 72–73 (RC) and 102–105 (GDGS) each bind ATP. Asp103 is a Mg(2+) binding site. 125–127 (TID) serves as a coordination point for substrate. The active-site Proton acceptor is Asp127. Arg154 serves as a coordination point for ADP. Substrate is bound by residues Arg162 and 169–171 (MGR). ADP contacts are provided by residues 185 to 187 (GAE), Arg211, and 213 to 215 (KKH). Substrate contacts are provided by residues Glu222, Arg243, and 249-252 (HVQR).

Belongs to the phosphofructokinase type A (PFKA) family. ATP-dependent PFK group I subfamily. Prokaryotic clade 'B1' sub-subfamily. Homotetramer. Requires Mg(2+) as cofactor.

Its subcellular location is the cytoplasm. The catalysed reaction is beta-D-fructose 6-phosphate + ATP = beta-D-fructose 1,6-bisphosphate + ADP + H(+). The protein operates within carbohydrate degradation; glycolysis; D-glyceraldehyde 3-phosphate and glycerone phosphate from D-glucose: step 3/4. With respect to regulation, allosterically activated by ADP and other diphosphonucleosides, and allosterically inhibited by phosphoenolpyruvate. Functionally, catalyzes the phosphorylation of D-fructose 6-phosphate to fructose 1,6-bisphosphate by ATP, the first committing step of glycolysis. The polypeptide is ATP-dependent 6-phosphofructokinase (Geobacillus stearothermophilus (Bacillus stearothermophilus)).